The sequence spans 353 residues: Photosystem II D2 protein (353 aa).

Thr-2 is modified (N-acetylthreonine). Thr-2 bears the Phosphothreonine mark. A helical membrane pass occupies residues 41–61 (CAYFALGGWFTGTTFVTSWYT). Residue His-118 coordinates chlorophyll a. A helical membrane pass occupies residues 125–141 (GFMLRQFELARSVQLRP). Pheophytin a-binding residues include Gln-130 and Asn-143. A helical membrane pass occupies residues 153–166 (VFVSVFLIYPLGQS). Residue His-198 coordinates chlorophyll a. A helical transmembrane segment spans residues 208 to 228 (AALLCAIHGATVENTLFEDGD). The a plastoquinone site is built by His-215 and Phe-262. Position 215 (His-215) interacts with Fe cation. A Fe cation-binding site is contributed by His-269. A helical membrane pass occupies residues 279–295 (GLWMSALGVVGLALNLR).

The protein belongs to the reaction center PufL/M/PsbA/D family. PSII is composed of 1 copy each of membrane proteins PsbA, PsbB, PsbC, PsbD, PsbE, PsbF, PsbH, PsbI, PsbJ, PsbK, PsbL, PsbM, PsbT, PsbX, PsbY, PsbZ, Psb30/Ycf12, at least 3 peripheral proteins of the oxygen-evolving complex and a large number of cofactors. It forms dimeric complexes. Requires The D1/D2 heterodimer binds P680, chlorophylls that are the primary electron donor of PSII, and subsequent electron acceptors. It shares a non-heme iron and each subunit binds pheophytin, quinone, additional chlorophylls, carotenoids and lipids. There is also a Cl(-1) ion associated with D1 and D2, which is required for oxygen evolution. The PSII complex binds additional chlorophylls, carotenoids and specific lipids. as cofactor.

The protein resides in the plastid. It localises to the chloroplast thylakoid membrane. The catalysed reaction is 2 a plastoquinone + 4 hnu + 2 H2O = 2 a plastoquinol + O2. In terms of biological role, photosystem II (PSII) is a light-driven water:plastoquinone oxidoreductase that uses light energy to abstract electrons from H(2)O, generating O(2) and a proton gradient subsequently used for ATP formation. It consists of a core antenna complex that captures photons, and an electron transfer chain that converts photonic excitation into a charge separation. The D1/D2 (PsbA/PsbD) reaction center heterodimer binds P680, the primary electron donor of PSII as well as several subsequent electron acceptors. D2 is needed for assembly of a stable PSII complex. The sequence is that of Photosystem II D2 protein from Platanus occidentalis (Sycamore).